Consider the following 430-residue polypeptide: Cytochrome c biogenesis protein CcsB (430 aa).

3 consecutive transmembrane segments (helical) span residues 14 to 34 (LRIA…GTAI), 72 to 92 (SSWF…CSWR), and 162 to 182 (AGPM…VWGS).

This sequence belongs to the Ccs1/CcsB family. As to quaternary structure, may interact with CcsA.

The protein resides in the cellular thylakoid membrane. Its function is as follows. Required during biogenesis of c-type cytochromes (cytochrome c6 and cytochrome f) at the step of heme attachment. In Prochlorococcus marinus (strain MIT 9313), this protein is Cytochrome c biogenesis protein CcsB.